The sequence spans 571 residues: Quinone-dependent D-lactate dehydrogenase (571 aa).

Positions 42–213 (GQGDALAVVF…SKLDDDRIKD (172 aa)) constitute an FAD-binding PCMH-type domain. FAD-binding positions include 76-80 (AANTG), 84-85 (GS), Gly-143, Ser-150, Gly-160, and Val-262. A disordered region spans residues 546 to 571 (RENDPTNSMNPGIGKTSKRKNWQEVE).

This sequence belongs to the quinone-dependent D-lactate dehydrogenase family. Requires FAD as cofactor.

The protein resides in the cell inner membrane. It carries out the reaction (R)-lactate + a quinone = a quinol + pyruvate. Its activity is regulated as follows. Inhibited by 2-hydroxy-3-butynoic acid, but not by p-chloromercuribenzoate, n-ethylmaleimide, or 5,5'-dithiobis(2-nitrobenzoic acid). Its function is as follows. Catalyzes the oxidation of D-lactate to pyruvate. Electrons derived from D-lactate oxidation are transferred to the ubiquinone/cytochrome electron transfer chain, where they may be used to provide energy for the active transport of a variety of amino acids and sugars across the membrane. This chain is Quinone-dependent D-lactate dehydrogenase, found in Escherichia coli (strain K12).